The sequence spans 349 residues: MKKQHIINETFLDAILAKKLGTTYTPPKEINDPDFDEAAKHFIDLLLRADGFKPVKTAVVHPIDKESLLGAVRAAQFNVIKPVLIGPQHKIESVAKVNNVDLEDYQVINVEHSHEAAKKAVELAKKREVAAIMKGSLHTDELMSAVVHKENGLRTERRISHAFLMAVATFPKPFIITDAAINIRPTLEDKRDIVQNAIDLMHMIKEDKQVRVAVLSAVETVTSAIPTTLDAAALSKMADRGQITSAIVDGPLAFDNAISLFAAEAKGISSSVSGNADILVVPDLESGNMLAKQLKYLGQAVMAGIVLGARVPIILTSRADPMDMRVISCVLASFIYNHTKAKLHIQAGK.

It belongs to the phosphate acetyltransferase and butyryltransferase family.

Its subcellular location is the cytoplasm. The catalysed reaction is acetyl-CoA + phosphate = acetyl phosphate + CoA. Its pathway is metabolic intermediate biosynthesis; acetyl-CoA biosynthesis; acetyl-CoA from acetate: step 2/2. This chain is Phosphate acetyltransferase (pta), found in Rickettsia felis (strain ATCC VR-1525 / URRWXCal2) (Rickettsia azadi).